The following is a 424-amino-acid chain: Synaptotagmin-1 (424 aa).

At 1–60 the chain is on the vesicular side; the sequence is MVSESHHEALAAPPATTVAAALPSNVTEPAAPGGGGGKEDAFSNLKKKFMNELNKIPLPP. Asn25 carries an N-linked (GlcNAc...) asparagine glycan. A helical transmembrane segment spans residues 61-82; it reads WALIAIAIVAVLLILTCCFCLC. Residues Cys77, Cys78, Cys80, Cys82, and Cys85 are each lipidated (S-palmitoyl cysteine). The Cytoplasmic portion of the chain corresponds to 83-424; the sequence is KKCLFKKKNK…EVDAMLAVKK (342 aa). The segment at 117-142 is disordered; the sequence is KDQALKDDDAETGLTDGEEKEEPKEV. The segment covering 124–136 has biased composition (acidic residues); that stretch reads DDAETGLTDGEEK. Positions 138-384 are phospholipid binding; that stretch reads EPKEVEKLGK…AIGKVFVGYN (247 aa). C2 domains follow at residues 144-263 and 275-408; these read KLGK…EEWR and KLGD…AQWH. 14 residues coordinate Ca(2+): Leu174, Asp175, Asp181, Asp233, Phe234, Asp235, Ser238, Lys239, Asp241, Asp306, Asp312, Asp366, Asp368, and Asp374.

The protein belongs to the synaptotagmin family. As to quaternary structure, homotetramer. The cofactor is Ca(2+).

It localises to the cytoplasmic vesicle. The protein resides in the secretory vesicle membrane. The protein localises to the secretory vesicle. It is found in the synaptic vesicle membrane. Its subcellular location is the chromaffin granule membrane. It localises to the cytoplasm. Functionally, calcium sensor that participates in triggering neurotransmitter release at the synapse. May have a regulatory role in the membrane interactions during trafficking of synaptic vesicles at the active zone of the synapse. It binds acidic phospholipids with a specificity that requires the presence of both an acidic head group and a diacyl backbone. May play a role in dendrite formation by melanocytes. The sequence is that of Synaptotagmin-1 (SYT1) from Gallus gallus (Chicken).